The chain runs to 349 residues: Phosphoribosylformylglycinamidine cyclo-ligase (349 aa).

Belongs to the AIR synthase family.

The protein resides in the cytoplasm. It carries out the reaction 2-formamido-N(1)-(5-O-phospho-beta-D-ribosyl)acetamidine + ATP = 5-amino-1-(5-phospho-beta-D-ribosyl)imidazole + ADP + phosphate + H(+). The protein operates within purine metabolism; IMP biosynthesis via de novo pathway; 5-amino-1-(5-phospho-D-ribosyl)imidazole from N(2)-formyl-N(1)-(5-phospho-D-ribosyl)glycinamide: step 2/2. The chain is Phosphoribosylformylglycinamidine cyclo-ligase from Bordetella parapertussis (strain 12822 / ATCC BAA-587 / NCTC 13253).